A 163-amino-acid chain; its full sequence is MAGTIEVLVAGGQADPGPPLGPELGPTPVDVQAVVNEINDQTEAFDGTEVPVTIDYDDDGSFDIDVGVPPTAALIKDELDFETGSGEPNEEFVADMSAEQLKTVAEQKLPDLLAYDTRNAAKEVAGTCVSLGVTIEGEDARTFNQRLDNGEFDDVFAEAEPAA.

The interval 1–25 (MAGTIEVLVAGGQADPGPPLGPELG) is disordered.

The protein belongs to the universal ribosomal protein uL11 family. Part of the ribosomal stalk of the 50S ribosomal subunit. Interacts with L10 and the large rRNA to form the base of the stalk. L10 forms an elongated spine to which L12 dimers bind in a sequential fashion forming a multimeric L10(L12)X complex.

Functionally, forms part of the ribosomal stalk which helps the ribosome interact with GTP-bound translation factors. The sequence is that of Large ribosomal subunit protein uL11 from Natronomonas pharaonis (strain ATCC 35678 / DSM 2160 / CIP 103997 / JCM 8858 / NBRC 14720 / NCIMB 2260 / Gabara) (Halobacterium pharaonis).